The sequence spans 400 residues: Tryptophan synthase beta chain (400 aa).

Lysine 95 bears the N6-(pyridoxal phosphate)lysine mark.

Belongs to the TrpB family. In terms of assembly, tetramer of two alpha and two beta chains. The cofactor is pyridoxal 5'-phosphate.

It carries out the reaction (1S,2R)-1-C-(indol-3-yl)glycerol 3-phosphate + L-serine = D-glyceraldehyde 3-phosphate + L-tryptophan + H2O. The protein operates within amino-acid biosynthesis; L-tryptophan biosynthesis; L-tryptophan from chorismate: step 5/5. Functionally, the beta subunit is responsible for the synthesis of L-tryptophan from indole and L-serine. This chain is Tryptophan synthase beta chain, found in Chlorobaculum tepidum (strain ATCC 49652 / DSM 12025 / NBRC 103806 / TLS) (Chlorobium tepidum).